The primary structure comprises 293 residues: uncharacterized protein (293 aa).

Residue Glu-47 is part of the active site.

This sequence belongs to the PhzF family.

This is an uncharacterized protein from Bacillus subtilis (strain 168).